The chain runs to 532 residues: Egg peptide speract receptor (532 aa).

Residues 1–30 (MGLPMMLQQYCWAACLVICIAISSVDDVGA) form the signal peptide. Residues 31 to 491 (EQNYGREAVE…VVCEGSTAPP (461 aa)) are Extracellular-facing. 4 consecutive SRCR domains span residues 43-144 (IRLI…VECL), 153-257 (LRMI…VVCK), 264-366 (IRLM…VVCA), and 382-485 (VRIV…VVCE). Disulfide bonds link Cys-68-Cys-133, Cys-81-Cys-143, Cys-112-Cys-122, Cys-178-Cys-244, Cys-191-Cys-256, Cys-223-Cys-233, Cys-289-Cys-355, Cys-302-Cys-365, Cys-335-Cys-345, Cys-406-Cys-475, Cys-419-Cys-484, and Cys-454-Cys-465. Residues Asn-78 and Asn-115 are each glycosylated (N-linked (GlcNAc...) asparagine). A glycan (N-linked (GlcNAc...) asparagine) is linked at Asn-459. Residues 492–520 (SGMSIAVIGGAAGGGVAGLAVAAFAFYYI) traverse the membrane as a helical segment. The Cytoplasmic segment spans residues 521 to 532 (KFVKPAGGGGQA).

The protein resides in the membrane. Receptor for the egg peptide speract. The chain is Egg peptide speract receptor from Strongylocentrotus purpuratus (Purple sea urchin).